Here is a 144-residue protein sequence, read N- to C-terminus: 3-hydroxyacyl-[acyl-carrier-protein] dehydratase FabZ (144 aa).

Residue His-47 is part of the active site.

The protein belongs to the thioester dehydratase family. FabZ subfamily.

The protein localises to the cytoplasm. The catalysed reaction is a (3R)-hydroxyacyl-[ACP] = a (2E)-enoyl-[ACP] + H2O. Involved in unsaturated fatty acids biosynthesis. Catalyzes the dehydration of short chain beta-hydroxyacyl-ACPs and long chain saturated and unsaturated beta-hydroxyacyl-ACPs. This is 3-hydroxyacyl-[acyl-carrier-protein] dehydratase FabZ from Alcanivorax borkumensis (strain ATCC 700651 / DSM 11573 / NCIMB 13689 / SK2).